The sequence spans 81 residues: Photosystem I iron-sulfur center (81 aa).

2 4Fe-4S ferredoxin-type domains span residues 2–31 (AHSVKVYDTCIGCTQCVRACPCDVLEMVPW) and 39–68 (IASAPRTEDCIGCKRCETACPTDFLSVRVY). [4Fe-4S] cluster contacts are provided by C11, C14, C17, C21, C48, C51, C54, and C58.

The eukaryotic PSI reaction center is composed of at least 11 subunits. It depends on [4Fe-4S] cluster as a cofactor.

The protein localises to the plastid. It localises to the chloroplast thylakoid membrane. It carries out the reaction reduced [plastocyanin] + hnu + oxidized [2Fe-2S]-[ferredoxin] = oxidized [plastocyanin] + reduced [2Fe-2S]-[ferredoxin]. Functionally, apoprotein for the two 4Fe-4S centers FA and FB of photosystem I (PSI); essential for photochemical activity. FB is the terminal electron acceptor of PSI, donating electrons to ferredoxin. The C-terminus interacts with PsaA/B/D and helps assemble the protein into the PSI complex. Required for binding of PsaD and PsaE to PSI. PSI is a plastocyanin/cytochrome c6-ferredoxin oxidoreductase, converting photonic excitation into a charge separation, which transfers an electron from the donor P700 chlorophyll pair to the spectroscopically characterized acceptors A0, A1, FX, FA and FB in turn. This Pyropia yezoensis (Susabi-nori) protein is Photosystem I iron-sulfur center.